Consider the following 284-residue polypeptide: MEMO1 family protein M1425_2054 (284 aa).

This sequence belongs to the MEMO1 family.

This Saccharolobus islandicus (strain M.14.25 / Kamchatka #1) (Sulfolobus islandicus) protein is MEMO1 family protein M1425_2054.